The chain runs to 549 residues: Beta-hexosaminidase Amuc_0868 (549 aa).

The signal sequence occupies residues M1 to E28. Substrate is bound at residue R161. Residues D190 and H260 each act as charge relay system in the active site. D326 contributes to the substrate binding site. The active-site Charge relay system is the E327. Substrate-binding positions include W393, Y420 to D422, and W474 to E476. Positions G526–R549 are disordered.

This sequence belongs to the glycosyl hydrolase 20 family.

It catalyses the reaction Hydrolysis of terminal non-reducing N-acetyl-D-hexosamine residues in N-acetyl-beta-D-hexosaminides.. Inhibited strongly by Cu(2+), Zn(2+), Cd(2+) and Ni(2+) ions. No effect on activity with Na(+), Li(+), K(+), Ca(2+), Mg(2+) or Mn(2+) ions. Its function is as follows. Potentially capable of cleaving the specific glycoside linkages in the process of mucin degradation in human intestinal tract. Hydrolyzes chromogenic substrates pNP-beta-GlcNAc with high activity and pNP-beta-GalNAc to a lesser extent, but not pNP-beta-glucose or pNP-beta-galactose. The sequence is that of Beta-hexosaminidase Amuc_0868 from Akkermansia muciniphila (strain ATCC BAA-835 / DSM 22959 / JCM 33894 / BCRC 81048 / CCUG 64013 / CIP 107961 / Muc).